The sequence spans 180 residues: NADH-quinone oxidoreductase subunit I (180 aa).

4Fe-4S ferredoxin-type domains lie at 44–74 and 90–119; these read LNRY…VEGA and RVYQ…MTTE. [4Fe-4S] cluster contacts are provided by C54, C57, C60, C64, C99, C102, C105, and C109. The tract at residues 145–180 is disordered; that stretch reads MQAPPHDMAPGKTDDDYYLGNVTPITPVPSGTEDAR.

This sequence belongs to the complex I 23 kDa subunit family. In terms of assembly, NDH-1 is composed of 14 different subunits. Subunits NuoA, H, J, K, L, M, N constitute the membrane sector of the complex. The cofactor is [4Fe-4S] cluster.

Its subcellular location is the cell membrane. The catalysed reaction is a quinone + NADH + 5 H(+)(in) = a quinol + NAD(+) + 4 H(+)(out). Functionally, NDH-1 shuttles electrons from NADH, via FMN and iron-sulfur (Fe-S) centers, to quinones in the respiratory chain. The immediate electron acceptor for the enzyme in this species is believed to be menaquinone. Couples the redox reaction to proton translocation (for every two electrons transferred, four hydrogen ions are translocated across the cytoplasmic membrane), and thus conserves the redox energy in a proton gradient. The polypeptide is NADH-quinone oxidoreductase subunit I (Mycolicibacterium smegmatis (strain ATCC 700084 / mc(2)155) (Mycobacterium smegmatis)).